Consider the following 221-residue polypeptide: Probable septum site-determining protein MinC (221 aa).

The protein belongs to the MinC family. Interacts with MinD and FtsZ.

Functionally, cell division inhibitor that blocks the formation of polar Z ring septums. Rapidly oscillates between the poles of the cell to destabilize FtsZ filaments that have formed before they mature into polar Z rings. Prevents FtsZ polymerization. The protein is Probable septum site-determining protein MinC of Shewanella denitrificans (strain OS217 / ATCC BAA-1090 / DSM 15013).